A 612-amino-acid chain; its full sequence is Elongation factor 4 (612 aa).

Residues 11–193 (KHIRNFSIVA…EIVKKVPAPN (183 aa)) enclose the tr-type G domain. GTP contacts are provided by residues 23 to 28 (DHGKST) and 140 to 143 (NKID).

Belongs to the TRAFAC class translation factor GTPase superfamily. Classic translation factor GTPase family. LepA subfamily.

The protein resides in the cell membrane. The enzyme catalyses GTP + H2O = GDP + phosphate + H(+). In terms of biological role, required for accurate and efficient protein synthesis under certain stress conditions. May act as a fidelity factor of the translation reaction, by catalyzing a one-codon backward translocation of tRNAs on improperly translocated ribosomes. Back-translocation proceeds from a post-translocation (POST) complex to a pre-translocation (PRE) complex, thus giving elongation factor G a second chance to translocate the tRNAs correctly. Binds to ribosomes in a GTP-dependent manner. The chain is Elongation factor 4 from Lactobacillus gasseri (strain ATCC 33323 / DSM 20243 / BCRC 14619 / CIP 102991 / JCM 1131 / KCTC 3163 / NCIMB 11718 / NCTC 13722 / AM63).